Reading from the N-terminus, the 264-residue chain is Small ribosomal subunit protein eS1 (264 aa).

N6-acetyllysine; alternate is present on Lys-34. Residue Lys-34 forms a Glycyl lysine isopeptide (Lys-Gly) (interchain with G-Cter in SUMO2); alternate linkage. Lys-56 carries the N6-acetyllysine modification. The residue at position 155 (Tyr-155) is an ADP-ribosyltyrosine. Positions 232 to 264 (HGEGSSSGKATGDETGAKVERADGYEPPVQESV) are disordered. Phosphoserine occurs at positions 236 and 237. Positions 242–255 (TGDETGAKVERADG) are enriched in basic and acidic residues. Lys-249 bears the N6-acetyllysine; alternate mark. A Glycyl lysine isopeptide (Lys-Gly) (interchain with G-Cter in SUMO2); alternate cross-link involves residue Lys-249. Tyr-256 bears the Phosphotyrosine mark. Ser-263 is modified (phosphoserine).

It belongs to the eukaryotic ribosomal protein eS1 family. In terms of assembly, component of the small ribosomal subunit. Mature ribosomes consist of a small (40S) and a large (60S) subunit. The 40S subunit contains about 33 different proteins and 1 molecule of RNA (18S). The 60S subunit contains about 49 different proteins and 3 molecules of RNA (28S, 5.8S and 5S). Identified in a IGF2BP1-dependent mRNP granule complex containing untranslated mRNAs. Binds with high affinity to IPO4. Interacts with DDIT3. Part of the small subunit (SSU) processome, composed of more than 70 proteins and the RNA chaperone small nucleolar RNA (snoRNA) U3. Post-translationally, ADP-ribosylated at Tyr-155 by PARP1 in presence of HPF1.

Its subcellular location is the cytoplasm. The protein localises to the nucleus. It is found in the nucleolus. In terms of biological role, component of the small ribosomal subunit. The ribosome is a large ribonucleoprotein complex responsible for the synthesis of proteins in the cell. Part of the small subunit (SSU) processome, first precursor of the small eukaryotic ribosomal subunit. During the assembly of the SSU processome in the nucleolus, many ribosome biogenesis factors, an RNA chaperone and ribosomal proteins associate with the nascent pre-rRNA and work in concert to generate RNA folding, modifications, rearrangements and cleavage as well as targeted degradation of pre-ribosomal RNA by the RNA exosome. May play a role during erythropoiesis through regulation of transcription factor DDIT3. The sequence is that of Small ribosomal subunit protein eS1 from Macaca fascicularis (Crab-eating macaque).